We begin with the raw amino-acid sequence, 250 residues long: Aminoglycoside 3'-phosphotransferase (250 aa).

Residue aspartate 178 is the Proton acceptor of the active site.

It belongs to the aminoglycoside phosphotransferase family.

It carries out the reaction kanamycin A + ATP = kanamycin 3'-phosphate + ADP + H(+). In terms of biological role, resistance to kanamycin and structurally-related aminoglycosides, including amikacin. The protein is Aminoglycoside 3'-phosphotransferase (aphA-7) of Campylobacter jejuni.